We begin with the raw amino-acid sequence, 536 residues long: Small conductance calcium-activated potassium channel protein 1 (536 aa).

The disordered stretch occupies residues Met1–Gly90. The segment covering Gln65–Asp75 has biased composition (acidic residues). The chain crosses the membrane as a helical span at residues Leu107–Val127. Residues Phe136–Tyr156 form a helical membrane-spanning segment. Residues Val224–His244 form a helical membrane-spanning segment. The helical transmembrane segment at Leu273–Ala293 threads the bilayer. Residues Phe313 to Val333 traverse the membrane as a helical segment. An intramembrane region (pore-forming) is located at residues Val342 to Ala362. The interval Asp380 to Ile459 is calmodulin-binding. The chain crosses the membrane as a helical span at residues Val487 to Pro507. Residues Ser514–Gly536 form a disordered region. The segment covering His515–Gly536 has biased composition (polar residues).

This sequence belongs to the potassium channel KCNN family. KCa2.1/KCNN1 subfamily. As to quaternary structure, homodimer. Heteromultimer with KCNN2 and KCNN3. The complex is composed of 4 channel subunits each of which binds to a calmodulin subunit which regulates the channel activity through calcium-binding. Interacts with calmodulin. Widely expressed including brain.

It is found in the membrane. The protein resides in the cytoplasm. The protein localises to the myofibril. Its subcellular location is the sarcomere. It localises to the z line. The catalysed reaction is K(+)(in) = K(+)(out). With respect to regulation, inhibited by bee venom neurotoxin apamin. Inhibited by d-tubocurarine and tetraethylammonium (TEA). Small conductance calcium-activated potassium channel that mediates the voltage-independent transmembrane transfer of potassium across the cell membrane through a constitutive interaction with calmodulin which binds the intracellular calcium allowing its opening. The current is characterized by a voltage-independent activation, an intracellular calcium concentration increase-dependent activation and a single-channel conductance of about 3 picosiemens. Also presents an inwardly rectifying current, thus reducing its already small outward conductance of potassium ions, which is particularly the case when the membrane potential displays positive values, above + 20 mV. Activation is followed by membrane hyperpolarization. Thought to regulate neuronal excitability by contributing to the slow component of synaptic afterhyperpolarization. This Rattus norvegicus (Rat) protein is Small conductance calcium-activated potassium channel protein 1.